A 64-amino-acid polypeptide reads, in one-letter code: uncharacterized protein (64 aa).

This is an uncharacterized protein from Archaeoglobus fulgidus (strain ATCC 49558 / DSM 4304 / JCM 9628 / NBRC 100126 / VC-16).